A 273-amino-acid polypeptide reads, in one-letter code: Outer surface protein A (273 aa).

Residues 1-16 form the signal peptide; that stretch reads MKKYLLGIGLILALIA. Cys-17 carries the N-palmitoyl cysteine lipid modification. Cys-17 carries S-diacylglycerol cysteine lipidation.

It belongs to the OspA lipoprotein family.

Its subcellular location is the cell outer membrane. The protein resides in the cell surface. Its function is as follows. Induces host (human and mouse) cytokine release by monocyte cell lines via TLR2 and CD14; nonlipidated protein does not stimulate host cells. In Borreliella burgdorferi (strain ATCC 35210 / DSM 4680 / CIP 102532 / B31) (Borrelia burgdorferi), this protein is Outer surface protein A.